The chain runs to 323 residues: Lipoyl synthase (323 aa).

[4Fe-4S] cluster is bound by residues C65, C70, C76, C91, C95, C98, and S304. The region spanning 77-293 (FNNGTATFMI…KKEALSIGFT (217 aa)) is the Radical SAM core domain.

The protein belongs to the radical SAM superfamily. Lipoyl synthase family. Requires [4Fe-4S] cluster as cofactor.

It is found in the cytoplasm. The enzyme catalyses [[Fe-S] cluster scaffold protein carrying a second [4Fe-4S](2+) cluster] + N(6)-octanoyl-L-lysyl-[protein] + 2 oxidized [2Fe-2S]-[ferredoxin] + 2 S-adenosyl-L-methionine + 4 H(+) = [[Fe-S] cluster scaffold protein] + N(6)-[(R)-dihydrolipoyl]-L-lysyl-[protein] + 4 Fe(3+) + 2 hydrogen sulfide + 2 5'-deoxyadenosine + 2 L-methionine + 2 reduced [2Fe-2S]-[ferredoxin]. It participates in protein modification; protein lipoylation via endogenous pathway; protein N(6)-(lipoyl)lysine from octanoyl-[acyl-carrier-protein]: step 2/2. In terms of biological role, catalyzes the radical-mediated insertion of two sulfur atoms into the C-6 and C-8 positions of the octanoyl moiety bound to the lipoyl domains of lipoate-dependent enzymes, thereby converting the octanoylated domains into lipoylated derivatives. The protein is Lipoyl synthase of Buchnera aphidicola subsp. Acyrthosiphon pisum (strain 5A).